A 139-amino-acid chain; its full sequence is Serpin-like protein HMSD (139 aa).

The first 20 residues, 1 to 20 (MSISSALAMVFMGAKGNTAA), serve as a signal peptide directing secretion. Residue Asn50 is glycosylated (N-linked (GlcNAc...) asparagine).

The protein belongs to the serpin family. Highly expressed in dendritic cells and primary leukemia cells, especially those of myeloid lineage.

It is found in the secreted. Its function is as follows. Putative serine protease inhibitor. This Homo sapiens (Human) protein is Serpin-like protein HMSD (HMSD).